A 599-amino-acid chain; its full sequence is Probable acetolactate synthase large subunit (599 aa).

Residue Glu47 participates in thiamine diphosphate binding. FAD is bound by residues Arg149, 258-279 (HGTK…IGCR), and 301-320 (DIDP…IVGD). Positions 404–484 (QNQMWMAHYF…VVICIFDNRT (81 aa)) are thiamine pyrophosphate binding. Mg(2+) is bound by residues Asp455 and Asn482.

The protein belongs to the TPP enzyme family. In terms of assembly, dimer of large and small chains. Requires Mg(2+) as cofactor. The cofactor is thiamine diphosphate.

It catalyses the reaction 2 pyruvate + H(+) = (2S)-2-acetolactate + CO2. It functions in the pathway amino-acid biosynthesis; L-isoleucine biosynthesis; L-isoleucine from 2-oxobutanoate: step 1/4. The protein operates within amino-acid biosynthesis; L-valine biosynthesis; L-valine from pyruvate: step 1/4. The sequence is that of Probable acetolactate synthase large subunit (ilvB) from Methanococcus aeolicus.